The primary structure comprises 309 residues: MTDQSLSPESGETPTHAGFVAIVGKPNVGKSTLLNAFLNTKVAPTSPRPQTTRRGVRGIYSTDTQQIVFVDTPGLHKPKDALGKYMNQEVQSALADVDAILWVVDLRHPPTEEDELVARQVRDLPKPLFLIGNKVDAAKYPDEAMRLYRALLEGRTGETHERMLSAQNSPQAVAALREQILDALPENPFFFPRSSASDQTREQWAAEIIREEAMKRLREELPYAVATRVTNWTEREDGLQRIEAELIVEKNAHKGMVIGAGGKMLREIGQAARKQLEVFLNCKVFLGLEVIVIPGWREDEEALRELGYE.

An Era-type G domain is found at H16–E186. The segment at G24–S31 is G1. G24 to S31 lines the GTP pocket. A G2 region spans residues Q50–R54. The segment at D71–G74 is G3. Residues D71 to L75 and N133 to D136 each bind GTP. The interval N133–D136 is G4. Residues L164–A166 form a G5 region. One can recognise a KH type-2 domain in the interval L217 to P294.

Belongs to the TRAFAC class TrmE-Era-EngA-EngB-Septin-like GTPase superfamily. Era GTPase family. As to quaternary structure, monomer.

The protein resides in the cytoplasm. It localises to the cell membrane. Its function is as follows. An essential GTPase that binds both GDP and GTP, with rapid nucleotide exchange. Plays a role in 16S rRNA processing and 30S ribosomal subunit biogenesis and possibly also in cell cycle regulation and energy metabolism. The sequence is that of GTPase Era from Deinococcus geothermalis (strain DSM 11300 / CIP 105573 / AG-3a).